We begin with the raw amino-acid sequence, 381 residues long: Alkanesulfonate monooxygenase (381 aa).

It belongs to the SsuD family. Homotetramer.

The enzyme catalyses an alkanesulfonate + FMNH2 + O2 = an aldehyde + FMN + sulfite + H2O + 2 H(+). Its function is as follows. Catalyzes the desulfonation of aliphatic sulfonates. The sequence is that of Alkanesulfonate monooxygenase from Escherichia coli O1:K1 / APEC.